We begin with the raw amino-acid sequence, 61 residues long: Weak toxin CM-2 (61 aa).

4 disulfides stabilise this stretch: Cys3/Cys21, Cys14/Cys37, Cys41/Cys53, and Cys54/Cys59.

This sequence belongs to the three-finger toxin family. Short-chain subfamily. Orphan group VI sub-subfamily. In terms of tissue distribution, expressed by the venom gland.

It localises to the secreted. This chain is Weak toxin CM-2, found in Naja haje haje (Egyptian cobra).